The chain runs to 529 residues: Probable DNA helicase MPN_340 (529 aa).

The 284-residue stretch at glutamate 2–isoleucine 285 folds into the UvrD-like helicase ATP-binding domain. Serine 23–threonine 30 is an ATP binding site.

Belongs to the helicase family. UvrD subfamily.

The enzyme catalyses Couples ATP hydrolysis with the unwinding of duplex DNA by translocating in the 3'-5' direction.. The catalysed reaction is ATP + H2O = ADP + phosphate + H(+). This chain is Probable DNA helicase MPN_340, found in Mycoplasma pneumoniae (strain ATCC 29342 / M129 / Subtype 1) (Mycoplasmoides pneumoniae).